The primary structure comprises 446 residues: Coiled-coil domain-containing protein 112 (446 aa).

Coiled-coil stretches lie at residues 23-116 and 219-400; these read LEEL…RKID and ERKK…NVSR. Disordered stretches follow at residues 247-277 and 394-430; these read NNTP…AVEA and VENN…LLHI. A compositionally biased stretch (basic and acidic residues) spans 255-268; the sequence is NKPEDNQKQKEEQR.

It localises to the cytoplasm. It is found in the cytoskeleton. The protein localises to the microtubule organizing center. Its subcellular location is the centrosome. The protein resides in the centriolar satellite. The protein is Coiled-coil domain-containing protein 112 (CCDC112) of Macaca fascicularis (Crab-eating macaque).